The following is an 89-amino-acid chain: Probable Fe(2+)-trafficking protein (89 aa).

This sequence belongs to the Fe(2+)-trafficking protein family.

Functionally, could be a mediator in iron transactions between iron acquisition and iron-requiring processes, such as synthesis and/or repair of Fe-S clusters in biosynthetic enzymes. This chain is Probable Fe(2+)-trafficking protein, found in Acinetobacter baumannii (strain SDF).